We begin with the raw amino-acid sequence, 939 residues long: Translation initiation factor IF-2 (939 aa).

The segment at 48–355 is disordered; sequence KFAPAPKVEN…KPEKKEKEEE (308 aa). The segment covering 79–93 has biased composition (low complexity); sequence QQNQAPKQPQQGTQN. Residues 114–130 are compositionally biased toward basic and acidic residues; the sequence is SRDKNSRRDNNNRDGQR. A compositionally biased stretch (low complexity) spans 131 to 257; the sequence is DNNGGYRNND…NNDRNNNGGF (127 aa). The span at 287 to 355 shows a compositional bias: basic and acidic residues; it reads RNNDRRDSAP…KPEKKEKEEE (69 aa). The tr-type G domain occupies 440–609; sequence PRPPVVCVMG…LLTAEVNELK (170 aa). Residues 449 to 456 form a G1 region; that stretch reads GHVDHGKT. 449-456 is a binding site for GTP; that stretch reads GHVDHGKT. Residues 474–478 are G2; sequence GITQK. Positions 495-498 are G3; the sequence is DTPG. Residues 495-499 and 549-552 each bind GTP; these read DTPGH and NKID. Residues 549–552 are G4; that stretch reads NKID. The G5 stretch occupies residues 585 to 587; that stretch reads SAH.

The protein belongs to the TRAFAC class translation factor GTPase superfamily. Classic translation factor GTPase family. IF-2 subfamily.

It localises to the cytoplasm. In terms of biological role, one of the essential components for the initiation of protein synthesis. Protects formylmethionyl-tRNA from spontaneous hydrolysis and promotes its binding to the 30S ribosomal subunits. Also involved in the hydrolysis of GTP during the formation of the 70S ribosomal complex. This Lachnospira eligens (strain ATCC 27750 / DSM 3376 / VPI C15-48 / C15-B4) (Eubacterium eligens) protein is Translation initiation factor IF-2.